The primary structure comprises 643 residues: Transcription elongation factor B polypeptide 3 (643 aa).

In terms of domain architecture, TFIIS N-terminal spans 9–82; sequence DVVRHYQRSI…TKWKAMVAKE (74 aa). 2 disordered regions span residues 86–289 and 302–351; these read IAST…MGAN and SSKK…SKKP. Residues 94-106 are compositionally biased toward basic and acidic residues; the sequence is HNEEDSGKTKSSD. The segment covering 114 to 124 has biased composition (polar residues); sequence KGGNSSSGEDL. Residue serine 120 is modified to Phosphoserine. A compositionally biased stretch (basic residues) spans 127 to 136; sequence SKHKSKHAKS. Basic and acidic residues-rich tracts occupy residues 164–198 and 207–237; these read HDKS…KDSS and SKSE…VKDK. Positions 238–255 are enriched in basic residues; sequence SSKHKSSSSKSSKRSHSP. Over residues 302 to 336 the composition is skewed to low complexity; sequence SSKKSSSNSKSKFVAKPTAAPSSSALSAPTTAGSS. Residues 413–571 are activation domain; that stretch reads AQGISSKTMR…PPRSVQRKQE (159 aa). Residues 439 to 448 are interacting with Elongin BC complex; the sequence is SLFDLCTRVL.

It localises to the nucleus. SIII, also known as elongin, is a general transcription elongation factor that increases the RNA polymerase II transcription elongation past template-encoded arresting sites. Subunit A is transcriptionally active and its transcription activity is strongly enhanced by binding to the dimeric complex of the SIII regulatory subunits B and C (elongin BC complex). May play an important role in metamorphosis. The protein is Transcription elongation factor B polypeptide 3 (EloA) of Drosophila melanogaster (Fruit fly).